The chain runs to 1045 residues: Tyrosine-protein kinase-like otk (1045 aa).

Positions 1 to 25 (MPIVMDMNMLLMLSLAFTVMAPASA) are cleaved as a signal peptide. Ig-like C2-type domains lie at 26 to 116 (SSSR…AKLS), 115 to 200 (LSVI…RVMS), 260 to 373 (PEGL…APVN), 376 to 469 (PGAL…VAIN), and 474 to 564 (PRFS…VRLL). The Extracellular segment spans residues 26-587 (SSSRFTQPPQ…AGDGFLVTRA (562 aa)). 4 disulfides stabilise this stretch: C49–C97, C139–C189, C285–C362, and C406–C453. N-linked (GlcNAc...) asparagine glycosylation is found at N344, N424, N435, N442, N450, N463, N518, and N530. Residues C496 and C548 are joined by a disulfide bond. The chain crosses the membrane as a helical span at residues 588 to 608 (VLITMTVALAYIVLVVGLMLW). Residues 609–1045 (CRYRRQARKA…LSKAMQAAEK (437 aa)) are Cytoplasmic-facing. Residues 628 to 676 (AGGDQAESGKNTEQEPCLSKQRNGHGKSRTAANGDAQKSDDTACSQQSK) form a disordered region. S681 is modified (phosphoserine). Residues 695-1040 (LSELIQIGRG…QLGAALSKAM (346 aa)) enclose the Protein kinase; inactive domain. Residues 722–790 (ASPSDKDADT…QPQEQAQSES (69 aa)) form a disordered region. The segment covering 725–736 (SDKDADTEKQHS) has biased composition (basic and acidic residues). A compositionally biased stretch (gly residues) spans 743–752 (GASGASGCGS). Residues 771 to 782 (DDIEEIKEEEQP) show a composition bias toward acidic residues.

The protein belongs to the protein kinase superfamily. Tyr protein kinase family. Insulin receptor subfamily. As to quaternary structure, interacts with plexA; component of a receptor complex that mediates the repulsive signaling in response to Semaphorin ligands.

It is found in the cell membrane. Functionally, acts as a calcium-dependent, homophilic cell adhesion molecule that regulates neural recognition during the development of the nervous system. Component of the repulsive Plexin signaling response to regulate motor axon guidance at the embryonic stage. Also component of a receptor complex that is required in the adult visual system to innervate the lamina layer; specific targeting of R1-R6 axons. In Drosophila mojavensis (Fruit fly), this protein is Tyrosine-protein kinase-like otk.